An 85-amino-acid chain; its full sequence is MSLIDMIFGKRQKSAAIARERLQIILAHERNGRHAPDYLPALQRELMEVISKYVSVNLEDIKVQVERQDDYEVLEVNIVLPEHQR.

The protein belongs to the MinE family.

Functionally, prevents the cell division inhibition by proteins MinC and MinD at internal division sites while permitting inhibition at polar sites. This ensures cell division at the proper site by restricting the formation of a division septum at the midpoint of the long axis of the cell. The chain is Cell division topological specificity factor from Chromobacterium violaceum (strain ATCC 12472 / DSM 30191 / JCM 1249 / CCUG 213 / NBRC 12614 / NCIMB 9131 / NCTC 9757 / MK).